The following is a 72-amino-acid chain: Large ribosomal subunit protein bL31c (72 aa).

It belongs to the bacterial ribosomal protein bL31 family. Type A subfamily. In terms of assembly, part of the 50S ribosomal subunit.

Its subcellular location is the plastid. The protein resides in the chloroplast. Its function is as follows. Binds the 23S rRNA. This is Large ribosomal subunit protein bL31c (rpl31) from Thalassiosira pseudonana (Marine diatom).